Consider the following 199-residue polypeptide: Recombination protein RecR (199 aa).

The C4-type zinc-finger motif lies at 58–73; it reads CSVCNNITDVDPCVFC. In terms of domain architecture, Toprim spans 81 to 176; the sequence is RLVCVVEEPT…RLTRIATGVP (96 aa).

It belongs to the RecR family.

In terms of biological role, may play a role in DNA repair. It seems to be involved in an RecBC-independent recombinational process of DNA repair. It may act with RecF and RecO. The chain is Recombination protein RecR from Acidobacterium capsulatum (strain ATCC 51196 / DSM 11244 / BCRC 80197 / JCM 7670 / NBRC 15755 / NCIMB 13165 / 161).